The primary structure comprises 156 residues: Endoribonuclease YbeY (156 aa).

Residues His117, His121, and His127 each coordinate Zn(2+).

This sequence belongs to the endoribonuclease YbeY family. The cofactor is Zn(2+).

The protein resides in the cytoplasm. Single strand-specific metallo-endoribonuclease involved in late-stage 70S ribosome quality control and in maturation of the 3' terminus of the 16S rRNA. This Shewanella frigidimarina (strain NCIMB 400) protein is Endoribonuclease YbeY.